The chain runs to 179 residues: Auxin-induced protein IAA6 (179 aa).

The EAR-like (transcriptional repression) motif lies at 13–17; that stretch reads LRLGL. A disordered region spans residues 31-52; it reads FSEIDGGVEENGGSGDRKSVDK. Residues 75 to 163 enclose the PB1 domain; the sequence is KMYMKVSMDG…KRLRIMKRSD (89 aa).

The protein belongs to the Aux/IAA family. In terms of assembly, homodimers and heterodimers.

It localises to the nucleus. Its function is as follows. Aux/IAA proteins are short-lived transcriptional factors that function as repressors of early auxin response genes at low auxin concentrations. Repression is thought to result from the interaction with auxin response factors (ARFs), proteins that bind to the auxin-responsive promoter element (AuxRE). Formation of heterodimers with ARF proteins may alter their ability to modulate early auxin response genes expression. This Pisum sativum (Garden pea) protein is Auxin-induced protein IAA6 (IAA6).